Reading from the N-terminus, the 329-residue chain is Serpentine receptor class alpha-4 (329 aa).

The next 6 membrane-spanning stretches (helical) occupy residues 25-45, 103-123, 144-164, 188-208, 238-258, and 273-293; these read IIVL…IKVV, LYLE…TGLL, GLAI…LIIW, YFQS…ILIW, ICFL…GFFI, and LVAV…ILIF.

This sequence belongs to the nematode receptor-like protein sra family.

The protein localises to the membrane. This is Serpentine receptor class alpha-4 (sra-4) from Caenorhabditis elegans.